The primary structure comprises 100 residues: MAKLANPRDVIIAPVVSEKSYGLMEQNVYTFYVSTDSNKTQIKDAVEQIFGVKVASVNTVNRAGKRKRTRTGYGQRKSTKRAYVTLREGSDSIDVFGAGA.

This sequence belongs to the universal ribosomal protein uL23 family. Part of the 50S ribosomal subunit. Contacts protein L29, and trigger factor when it is bound to the ribosome.

Its function is as follows. One of the early assembly proteins it binds 23S rRNA. One of the proteins that surrounds the polypeptide exit tunnel on the outside of the ribosome. Forms the main docking site for trigger factor binding to the ribosome. This Corynebacterium aurimucosum (strain ATCC 700975 / DSM 44827 / CIP 107346 / CN-1) (Corynebacterium nigricans) protein is Large ribosomal subunit protein uL23.